The primary structure comprises 309 residues: ATP-dependent Clp protease proteolytic subunit 3, chloroplastic (309 aa).

A chloroplast-targeting transit peptide spans 1 to 70 (MEMSLRLASS…WDVSSFSIDS (70 aa)). Val71 is modified (N-acetylvaline). Catalysis depends on Ser164, which acts as the Nucleophile. His189 is an active-site residue. Residue Thr194 is modified to Phosphothreonine. The tract at residues 290–309 (DNTNLPSERSMTQNGYAAIE) is disordered. Over residues 292 to 309 (TNLPSERSMTQNGYAAIE) the composition is skewed to polar residues.

The protein belongs to the peptidase S14 family. In terms of assembly, component of the chloroplastic Clp protease core complex which consist of at least 16 proteins: CLPP4 (3 copies), CLPP5 (3 copies), CLPR4 (2 copies), ClpP1 (1 copy), CLPP6 (1 copy), CLPR2 (1 copy), CLPT1 (1 copy), CLPT2 (1 copy) and 3 copies of CLPP3 and/or CLPR1 and/or CLPR3. The core complex is organized in two heptameric rings, one containing CLPP3,4,5,6 in a 1:2:3:1 ratio and the other CLPP1 and CLPR1,2,3,4 in a 3:1:1:1:1 ratio. Interacts with CHIP. In terms of processing, ubiquitinated in vitro by CHIP. Mostly expressed in leaves. Also detected in stems, and to a lower extent, in roots (at protein level).

It is found in the plastid. Its subcellular location is the chloroplast stroma. It catalyses the reaction Hydrolysis of proteins to small peptides in the presence of ATP and magnesium. alpha-casein is the usual test substrate. In the absence of ATP, only oligopeptides shorter than five residues are hydrolyzed (such as succinyl-Leu-Tyr-|-NHMec, and Leu-Tyr-Leu-|-Tyr-Trp, in which cleavage of the -Tyr-|-Leu- and -Tyr-|-Trp bonds also occurs).. In terms of biological role, cleaves peptides in various proteins in a process that requires ATP hydrolysis. Has a chymotrypsin-like activity. Plays a major role in the degradation of misfolded proteins. In the absence of CLPP3, modified ClpPR core(s) could be formed, albeit at strongly reduced levels. In Arabidopsis thaliana (Mouse-ear cress), this protein is ATP-dependent Clp protease proteolytic subunit 3, chloroplastic.